The following is a 480-amino-acid chain: Glutamate--tRNA ligase (480 aa).

Residues 8-18 carry the 'HIGH' region motif; it reads PSPTGPLHIGG. The 'KMSKS' region motif lies at 249 to 253; that stretch reads KMSKR. ATP is bound at residue Lys-252.

This sequence belongs to the class-I aminoacyl-tRNA synthetase family. Glutamate--tRNA ligase type 1 subfamily. Monomer.

It localises to the cytoplasm. The enzyme catalyses tRNA(Glu) + L-glutamate + ATP = L-glutamyl-tRNA(Glu) + AMP + diphosphate. Functionally, catalyzes the attachment of glutamate to tRNA(Glu) in a two-step reaction: glutamate is first activated by ATP to form Glu-AMP and then transferred to the acceptor end of tRNA(Glu). The chain is Glutamate--tRNA ligase from Carboxydothermus hydrogenoformans (strain ATCC BAA-161 / DSM 6008 / Z-2901).